Consider the following 160-residue polypeptide: S-ribosylhomocysteine lyase (160 aa).

Residues His-57, His-61, and Cys-127 each contribute to the Fe cation site.

Belongs to the LuxS family. As to quaternary structure, homodimer. The cofactor is Fe cation.

The catalysed reaction is S-(5-deoxy-D-ribos-5-yl)-L-homocysteine = (S)-4,5-dihydroxypentane-2,3-dione + L-homocysteine. Involved in the synthesis of autoinducer 2 (AI-2) which is secreted by bacteria and is used to communicate both the cell density and the metabolic potential of the environment. The regulation of gene expression in response to changes in cell density is called quorum sensing. Catalyzes the transformation of S-ribosylhomocysteine (RHC) to homocysteine (HC) and 4,5-dihydroxy-2,3-pentadione (DPD). The protein is S-ribosylhomocysteine lyase of Streptococcus mutans serotype c (strain ATCC 700610 / UA159).